The chain runs to 255 residues: Hydroxyacylglutathione hydrolase (255 aa).

Zn(2+) contacts are provided by His53, His55, Asp57, His58, His111, Asp128, and His166.

The protein belongs to the metallo-beta-lactamase superfamily. Glyoxalase II family. In terms of assembly, monomer. Zn(2+) is required as a cofactor.

It carries out the reaction an S-(2-hydroxyacyl)glutathione + H2O = a 2-hydroxy carboxylate + glutathione + H(+). The protein operates within secondary metabolite metabolism; methylglyoxal degradation; (R)-lactate from methylglyoxal: step 2/2. Its function is as follows. Thiolesterase that catalyzes the hydrolysis of S-D-lactoyl-glutathione to form glutathione and D-lactic acid. This is Hydroxyacylglutathione hydrolase from Nitrosomonas eutropha (strain DSM 101675 / C91 / Nm57).